The sequence spans 521 residues: GMP synthase [glutamine-hydrolyzing] (521 aa).

Residues 10–204 (SLLILDFGSQ…ALGICGCEND (195 aa)) enclose the Glutamine amidotransferase type-1 domain. Catalysis depends on cysteine 87, which acts as the Nucleophile. Catalysis depends on residues histidine 178 and glutamate 180. Positions 205 to 396 (WNMHNFAEEQ…LGMPREMLMR (192 aa)) constitute a GMPS ATP-PPase domain. 232 to 238 (SGGVDSS) contributes to the ATP binding site.

As to quaternary structure, homodimer.

It carries out the reaction XMP + L-glutamine + ATP + H2O = GMP + L-glutamate + AMP + diphosphate + 2 H(+). The protein operates within purine metabolism; GMP biosynthesis; GMP from XMP (L-Gln route): step 1/1. Functionally, catalyzes the synthesis of GMP from XMP. The protein is GMP synthase [glutamine-hydrolyzing] of Wolinella succinogenes (strain ATCC 29543 / DSM 1740 / CCUG 13145 / JCM 31913 / LMG 7466 / NCTC 11488 / FDC 602W) (Vibrio succinogenes).